Reading from the N-terminus, the 117-residue chain is Large ribosomal subunit protein bL20c (117 aa).

The protein belongs to the bacterial ribosomal protein bL20 family.

The protein localises to the plastid. It localises to the chloroplast. Functionally, binds directly to 23S ribosomal RNA and is necessary for the in vitro assembly process of the 50S ribosomal subunit. It is not involved in the protein synthesizing functions of that subunit. This Carica papaya (Papaya) protein is Large ribosomal subunit protein bL20c.